The sequence spans 338 residues: Aspartate carbamoyltransferase catalytic subunit (338 aa).

R72 and T73 together coordinate carbamoyl phosphate. Residue K100 participates in L-aspartate binding. 3 residues coordinate carbamoyl phosphate: R122, H152, and Q155. The L-aspartate site is built by R186 and R243. 2 residues coordinate carbamoyl phosphate: G284 and P285.

This sequence belongs to the aspartate/ornithine carbamoyltransferase superfamily. ATCase family. Heterododecamer (2C3:3R2) of six catalytic PyrB chains organized as two trimers (C3), and six regulatory PyrI chains organized as three dimers (R2).

It catalyses the reaction carbamoyl phosphate + L-aspartate = N-carbamoyl-L-aspartate + phosphate + H(+). The protein operates within pyrimidine metabolism; UMP biosynthesis via de novo pathway; (S)-dihydroorotate from bicarbonate: step 2/3. Functionally, catalyzes the condensation of carbamoyl phosphate and aspartate to form carbamoyl aspartate and inorganic phosphate, the committed step in the de novo pyrimidine nucleotide biosynthesis pathway. In Acinetobacter baumannii (strain ACICU), this protein is Aspartate carbamoyltransferase catalytic subunit.